The primary structure comprises 154 residues: Ribonuclease H (154 aa).

One can recognise an RNase H type-1 domain in the interval 1–142 (MLKQVEIFTD…CDELARRAAG (142 aa)). Mg(2+)-binding residues include Asp-10, Glu-48, Asp-70, and Asp-134.

It belongs to the RNase H family. In terms of assembly, monomer. Mg(2+) is required as a cofactor.

It is found in the cytoplasm. It catalyses the reaction Endonucleolytic cleavage to 5'-phosphomonoester.. Endonuclease that specifically degrades the RNA of RNA-DNA hybrids. This is Ribonuclease H from Edwardsiella ictaluri (strain 93-146).